The following is a 118-amino-acid chain: Down syndrome critical region protein 4 (118 aa).

The segment at 1 to 39 is disordered; sequence MSLIILTRDDEPRIFTPDSDAASPALHSTSPLPDPASAS. A compositionally biased stretch (low complexity) spans 28-39; it reads STSPLPDPASAS.

Mainly expressed in placenta.

This chain is Down syndrome critical region protein 4 (DSCR4), found in Homo sapiens (Human).